The chain runs to 655 residues: Putative calcium up-regulated protein J (655 aa).

A Ricin B-type lectin domain is found at 40-181 (KSRAMLKGDN…DNVCFQWDLE (142 aa)).

This sequence belongs to the cup family.

This is Putative calcium up-regulated protein J (cupJ) from Dictyostelium discoideum (Social amoeba).